The sequence spans 215 residues: Chaperone protein TorD (215 aa).

It belongs to the TorD/DmsD family. TorD subfamily.

It is found in the cytoplasm. Functionally, involved in the biogenesis of TorA. Acts on TorA before the insertion of the molybdenum cofactor and, as a result, probably favors a conformation of the apoenzyme that is competent for acquiring the cofactor. This is Chaperone protein TorD from Vibrio atlanticus (strain LGP32) (Vibrio splendidus (strain Mel32)).